A 309-amino-acid polypeptide reads, in one-letter code: Acetyl-coenzyme A carboxylase carboxyl transferase subunit beta (309 aa).

The 270-residue stretch at 29–298 folds into the CoA carboxyltransferase N-terminal domain; that stretch reads NSDWTSCCKG…AINSSENETS (270 aa). Residues C35, C36, C52, and C55 each contribute to the Zn(2+) site.

This sequence belongs to the AccD/PCCB family. As to quaternary structure, acetyl-CoA carboxylase is a heterohexamer composed of biotin carboxyl carrier protein (AccB), biotin carboxylase (AccC) and two subunits each of ACCase subunit alpha (AccA) and ACCase subunit beta (AccD). Requires Zn(2+) as cofactor.

It localises to the cytoplasm. The enzyme catalyses N(6)-carboxybiotinyl-L-lysyl-[protein] + acetyl-CoA = N(6)-biotinyl-L-lysyl-[protein] + malonyl-CoA. It participates in lipid metabolism; malonyl-CoA biosynthesis; malonyl-CoA from acetyl-CoA: step 1/1. Its function is as follows. Component of the acetyl coenzyme A carboxylase (ACC) complex. Biotin carboxylase (BC) catalyzes the carboxylation of biotin on its carrier protein (BCCP) and then the CO(2) group is transferred by the transcarboxylase to acetyl-CoA to form malonyl-CoA. The polypeptide is Acetyl-coenzyme A carboxylase carboxyl transferase subunit beta (Pelagibacter ubique (strain HTCC1062)).